We begin with the raw amino-acid sequence, 293 residues long: tRNA-cytidine(32) 2-sulfurtransferase (293 aa).

Positions serine 62–serine 67 match the PP-loop motif motif. Residues cysteine 137, cysteine 140, and cysteine 228 each contribute to the [4Fe-4S] cluster site.

This sequence belongs to the TtcA family. In terms of assembly, homodimer. Requires Mg(2+) as cofactor. [4Fe-4S] cluster is required as a cofactor.

It localises to the cytoplasm. The enzyme catalyses cytidine(32) in tRNA + S-sulfanyl-L-cysteinyl-[cysteine desulfurase] + AH2 + ATP = 2-thiocytidine(32) in tRNA + L-cysteinyl-[cysteine desulfurase] + A + AMP + diphosphate + H(+). It participates in tRNA modification. Its function is as follows. Catalyzes the ATP-dependent 2-thiolation of cytidine in position 32 of tRNA, to form 2-thiocytidine (s(2)C32). The sulfur atoms are provided by the cysteine/cysteine desulfurase (IscS) system. The polypeptide is tRNA-cytidine(32) 2-sulfurtransferase (Brucella melitensis biotype 1 (strain ATCC 23456 / CCUG 17765 / NCTC 10094 / 16M)).